An 89-amino-acid polypeptide reads, in one-letter code: Small ribosomal subunit protein uS17 (89 aa).

It belongs to the universal ribosomal protein uS17 family. As to quaternary structure, part of the 30S ribosomal subunit.

One of the primary rRNA binding proteins, it binds specifically to the 5'-end of 16S ribosomal RNA. The sequence is that of Small ribosomal subunit protein uS17 from Chlorobaculum tepidum (strain ATCC 49652 / DSM 12025 / NBRC 103806 / TLS) (Chlorobium tepidum).